A 380-amino-acid chain; its full sequence is Queuine tRNA-ribosyltransferase (380 aa).

The active-site Proton acceptor is the Asp-89. Residues 89–93 (DSGGF), Asp-143, Gln-187, and Gly-214 contribute to the substrate site. The RNA binding stretch occupies residues 245 to 251 (GVGKPED). The Nucleophile role is filled by Asp-264. An RNA binding; important for wobble base 34 recognition region spans residues 269-273 (TRNAR). Positions 302, 304, 307, and 333 each coordinate Zn(2+).

The protein belongs to the queuine tRNA-ribosyltransferase family. Homodimer. Within each dimer, one monomer is responsible for RNA recognition and catalysis, while the other monomer binds to the replacement base PreQ1. It depends on Zn(2+) as a cofactor.

The catalysed reaction is 7-aminomethyl-7-carbaguanine + guanosine(34) in tRNA = 7-aminomethyl-7-carbaguanosine(34) in tRNA + guanine. Its pathway is tRNA modification; tRNA-queuosine biosynthesis. Functionally, catalyzes the base-exchange of a guanine (G) residue with the queuine precursor 7-aminomethyl-7-deazaguanine (PreQ1) at position 34 (anticodon wobble position) in tRNAs with GU(N) anticodons (tRNA-Asp, -Asn, -His and -Tyr). Catalysis occurs through a double-displacement mechanism. The nucleophile active site attacks the C1' of nucleotide 34 to detach the guanine base from the RNA, forming a covalent enzyme-RNA intermediate. The proton acceptor active site deprotonates the incoming PreQ1, allowing a nucleophilic attack on the C1' of the ribose to form the product. After dissociation, two additional enzymatic reactions on the tRNA convert PreQ1 to queuine (Q), resulting in the hypermodified nucleoside queuosine (7-(((4,5-cis-dihydroxy-2-cyclopenten-1-yl)amino)methyl)-7-deazaguanosine). The polypeptide is Queuine tRNA-ribosyltransferase (Proteus mirabilis (strain HI4320)).